Reading from the N-terminus, the 79-residue chain is DNA-directed RNA polymerase subunit omega (79 aa).

Belongs to the RNA polymerase subunit omega family. The RNAP catalytic core consists of 2 alpha, 1 beta, 1 beta' and 1 omega subunit. When a sigma factor is associated with the core the holoenzyme is formed, which can initiate transcription.

It carries out the reaction RNA(n) + a ribonucleoside 5'-triphosphate = RNA(n+1) + diphosphate. Its function is as follows. Promotes RNA polymerase assembly. Latches the N- and C-terminal regions of the beta' subunit thereby facilitating its interaction with the beta and alpha subunits. This Thermotoga neapolitana (strain ATCC 49049 / DSM 4359 / NBRC 107923 / NS-E) protein is DNA-directed RNA polymerase subunit omega.